The chain runs to 558 residues: Formate--tetrahydrofolate ligase 2 (558 aa).

Residue 67–74 coordinates ATP; sequence TPAGEGKT.

It belongs to the formate--tetrahydrofolate ligase family.

The catalysed reaction is (6S)-5,6,7,8-tetrahydrofolate + formate + ATP = (6R)-10-formyltetrahydrofolate + ADP + phosphate. The protein operates within one-carbon metabolism; tetrahydrofolate interconversion. In Desulfitobacterium hafniense (strain Y51), this protein is Formate--tetrahydrofolate ligase 2.